The following is a 403-amino-acid chain: Tryptophan synthase beta chain 1 (403 aa).

Lysine 93 is subject to N6-(pyridoxal phosphate)lysine.

The protein belongs to the TrpB family. Tetramer of two alpha and two beta chains. Pyridoxal 5'-phosphate serves as cofactor.

It catalyses the reaction (1S,2R)-1-C-(indol-3-yl)glycerol 3-phosphate + L-serine = D-glyceraldehyde 3-phosphate + L-tryptophan + H2O. It functions in the pathway amino-acid biosynthesis; L-tryptophan biosynthesis; L-tryptophan from chorismate: step 5/5. Its function is as follows. The beta subunit is responsible for the synthesis of L-tryptophan from indole and L-serine. This chain is Tryptophan synthase beta chain 1 (trpB1), found in Methanosarcina acetivorans (strain ATCC 35395 / DSM 2834 / JCM 12185 / C2A).